A 345-amino-acid chain; its full sequence is Calcium/calmodulin-dependent protein kinase type 1 (345 aa).

The interval methionine 1 to lysine 23 is disordered. Residues tyrosine 31–isoleucine 287 enclose the Protein kinase domain. ATP-binding positions include leucine 37–valine 45 and lysine 61. Aspartate 153 functions as the Proton acceptor in the catalytic mechanism. Positions isoleucine 287–methionine 327 are autoinhibitory domain. Residues lysine 307–arginine 328 form a calmodulin-binding region.

This sequence belongs to the protein kinase superfamily. CAMK Ser/Thr protein kinase family. CaMK subfamily. Highly expressed in hepatopancreas and to a lesser extent in gills. Low expression in hemocytes, testis, ovary, heart, eyestalk, muscle and epidermis.

The catalysed reaction is L-seryl-[protein] + ATP = O-phospho-L-seryl-[protein] + ADP + H(+). It catalyses the reaction L-threonyl-[protein] + ATP = O-phospho-L-threonyl-[protein] + ADP + H(+). Its activity is regulated as follows. Activated by Ca(2+)/calmodulin. Binding of calmodulin results in conformational change that relieves intrasteric autoinhibition. Functionally, calcium/calmodulin-dependent protein kinase that operates in the calcium-triggered CaMKK-CaMK1 signaling cascade and, upon calcium influx, regulates transcription activators activity, cell cycle, hormone production, cell differentiation, actin filament organization and neurite outgrowth. Involved in molting. The polypeptide is Calcium/calmodulin-dependent protein kinase type 1 (Macrobrachium nipponense (Oriental river shrimp)).